The sequence spans 234 residues: Putative lipoyltransferase 2, mitochondrial (234 aa).

A mitochondrion-targeting transit peptide spans 1–28 (MPFVRPLVTVVRAGRHSYSAGLQLQQRL). The region spanning 39 to 220 (AEFRNYLVLQ…SFAKVFECRL (182 aa)) is the BPL/LPL catalytic domain. Substrate contacts are provided by residues 83 to 90 (RGGLITFH), 150 to 152 (AIG), and 163 to 165 (GIG). The active-site Acyl-thioester intermediate is the Cys181.

It belongs to the LipB family.

The protein localises to the mitochondrion. The enzyme catalyses octanoyl-[ACP] + L-lysyl-[protein] = N(6)-octanoyl-L-lysyl-[protein] + holo-[ACP] + H(+). Its pathway is protein modification; protein lipoylation via endogenous pathway; protein N(6)-(lipoyl)lysine from octanoyl-[acyl-carrier-protein]: step 1/2. Functionally, catalyzes the transfer of endogenously produced octanoic acid from octanoyl-acyl-carrier-protein onto the lipoyl domains of lipoate-dependent enzymes. Lipoyl-ACP can also act as a substrate although octanoyl-ACP is likely to be the physiological substrate. The chain is Putative lipoyltransferase 2, mitochondrial from Drosophila melanogaster (Fruit fly).